The chain runs to 202 residues: Probable cobalt-precorrin-6B C(15)-methyltransferase (decarboxylating) (202 aa).

S-adenosyl-L-methionine is bound by residues threonine 29, 53–57, aspartate 77, and valine 106; that span reads GCGSG.

This sequence belongs to the methyltransferase superfamily. Archaeal-type CbiT family.

It carries out the reaction Co-precorrin-6B + S-adenosyl-L-methionine = Co-precorrin-7 + S-adenosyl-L-homocysteine + CO2. It participates in cofactor biosynthesis; adenosylcobalamin biosynthesis; cob(II)yrinate a,c-diamide from sirohydrochlorin (anaerobic route): step 8/10. Catalyzes the methylation of C-15 in cobalt-precorrin-6B followed by the decarboxylation of C-12 to form cobalt-precorrin-7. The polypeptide is Probable cobalt-precorrin-6B C(15)-methyltransferase (decarboxylating) (Thermoplasma acidophilum (strain ATCC 25905 / DSM 1728 / JCM 9062 / NBRC 15155 / AMRC-C165)).